Here is a 659-residue protein sequence, read N- to C-terminus: ATP-binding cassette sub-family D member 3 (659 aa).

An interaction with PEX19 region spans residues 1–61; the sequence is MAAFSKYLTA…GKKERAVVDK (61 aa). N12 carries N-linked (GlcNAc...) asparagine glycosylation. Residue K61 is modified to N6-acetyllysine. Residues 84-104 traverse the membrane as a helical segment; that stretch reads GYLVLIAVMLVSRTYCDVWMI. One can recognise an ABC transmembrane type-1 domain in the interval 85–372; it reads YLVLIAVMLV…MLLRMSQALG (288 aa). Residue N106 is glycosylated (N-linked (GlcNAc...) asparagine). Residues 126–146 traverse the membrane as a helical segment; it reads LLNFIAAMPLISLVNNFLKYG. An N-linked (GlcNAc...) asparagine glycan is attached at N206. Residues 224-244 traverse the membrane as a helical segment; that stretch reads AIGAQGPASMMAYLVVSGLFL. K260 carries the post-translational modification N6-acetyllysine. Residues 313–333 traverse the membrane as a helical segment; sequence MGFIDSIIAKYLATVVGYLVV. The residue at position 399 (K399) is an N6-acetyllysine. The ABC transporter domain occupies 440–659; sequence IKFDHVPLAT…ITEDTVEFGS (220 aa). 473–480 contributes to the ATP binding site; that stretch reads GPNGCGKS. K533 carries the N6-acetyllysine modification. A Phosphoserine modification is found at S659.

It belongs to the ABC transporter superfamily. ABCD family. Peroxisomal fatty acyl CoA transporter (TC 3.A.1.203) subfamily. As to quaternary structure, homodimers. Can form heterodimers with ABCD1 and ABCD2. Dimerization is necessary to form an active transporter. Interacts with PEX19; mediates the targeting of ABCD3 to peroxisomes. Post-translationally, ubiquitinated by PEX2 during pexophagy in response to starvation, leading to its degradation.

It is found in the peroxisome membrane. The catalysed reaction is a very long-chain fatty acyl-CoA + H2O = a very long-chain fatty acid + CoA + H(+). It catalyses the reaction a very long-chain fatty acid(in) + ATP + H2O = a very long-chain fatty acid(out) + ADP + phosphate + H(+). The enzyme catalyses a long-chain fatty acyl-CoA + H2O = a long-chain fatty acid + CoA + H(+). It carries out the reaction a long-chain fatty acid(in) + ATP + H2O = a long-chain fatty acid(out) + ADP + phosphate + H(+). The catalysed reaction is pristanoyl-CoA + H2O = 2,6,10,14-tetramethylpentadecanoate + CoA + H(+). It catalyses the reaction 2,6,10,14-tetramethylpentadecanoate(in) + ATP + H2O = 2,6,10,14-tetramethylpentadecanoate(out) + ADP + phosphate + H(+). The enzyme catalyses hexadecanedioyl-CoA + H2O = hexadecanedioate + CoA + H(+). It carries out the reaction hexadecanedioate(in) + ATP + H2O = hexadecanedioate(out) + ADP + phosphate + H(+). The catalysed reaction is (5Z,8Z,11Z,14Z,17Z)-eicosapentaenoyl-CoA + H2O = (5Z,8Z,11Z,14Z,17Z)-eicosapentaenoate + CoA + H(+). It catalyses the reaction (5Z,8Z,11Z,14Z,17Z)-eicosapentaenoate(in) + ATP + H2O = (5Z,8Z,11Z,14Z,17Z)-eicosapentaenoate(out) + ADP + phosphate + H(+). The enzyme catalyses (4Z,7Z,10Z,13Z,16Z,19Z)-docosahexaenoyl-CoA + H2O = (4Z,7Z,10Z,13Z,16Z,19Z)-docosahexaenoate + CoA + H(+). It carries out the reaction (4Z,7Z,10Z,13Z,16Z,19Z)-docosahexaenoate(in) + ATP + H2O = (4Z,7Z,10Z,13Z,16Z,19Z)-docosahexaenoate(out) + ADP + phosphate + H(+). In terms of biological role, broad substrate specificity ATP-dependent transporter of the ATP-binding cassette (ABC) family that catalyzes the transport of long-chain fatty acids (LCFA)-CoA, dicarboxylic acids-CoA, long-branched-chain fatty acids-CoA and bile acids from the cytosol to the peroxisome lumen for beta-oxydation. Has fatty acyl-CoA thioesterase and ATPase activities. Probably hydrolyzes fatty acyl-CoAs into free fatty acids prior to their ATP-dependent transport into peroxisomes. Thus, play a role in regulation of LCFAs and energy metabolism namely, in the degradation and biosynthesis of fatty acids by beta-oxidation. This Homo sapiens (Human) protein is ATP-binding cassette sub-family D member 3.